A 218-amino-acid chain; its full sequence is MEWSQIFHDITTKHDFKAMHDFLEKEYSTAIVYPDRENIYQAFDLTPFENIKVVILGQDPYHGPNQAHGLAFSVQPNAKFPPSLRNMYKELADDIGCVRQTPHLQDWAREGVLLLNTVLTVRQGEANSHRDIGWETFTDEIIKAVSDYKEHVVFILWGKPAQQKIKLIDTSKHCIIKSVHPSPLSAYRGFFGSKPYSKANTYLESVGKSPINWCESEA.

Catalysis depends on Asp59, which acts as the Proton acceptor.

This sequence belongs to the uracil-DNA glycosylase (UDG) superfamily. UNG family.

The protein resides in the cytoplasm. The catalysed reaction is Hydrolyzes single-stranded DNA or mismatched double-stranded DNA and polynucleotides, releasing free uracil.. Functionally, excises uracil residues from the DNA which can arise as a result of misincorporation of dUMP residues by DNA polymerase or due to deamination of cytosine. This Staphylococcus aureus (strain bovine RF122 / ET3-1) protein is Uracil-DNA glycosylase.